A 325-amino-acid polypeptide reads, in one-letter code: MVCGSPGGMLLLRAGLLALAALCLLRVPGARAAACEPVRIPLCKSLPWNMTKMPNHLHHSTQANAILAIEQFEGLLGTHCSPDLLFFLCAMYAPICTIDFQHEPIKPCKSVCERARQGCEPILIKYRHSWPENLACEELPVYDRGVCISPEAIVTADGADFPMDSSNGNCRGASSERCKCKPIRATQKTYFRNNYNYVIRAKVKEIKTKCHDVTAVVEVKEILKSSLVNIPRDTVNLYTSSGCLCPPLNVNEEYIIMGYEDEERSRLLLVEGSIAEKWKDRLGKKVKRWDMKLRHLGLSKSDSSNSDSTQSQKSGRNSNPRQARN.

A signal peptide spans 1–32; sequence MVCGSPGGMLLLRAGLLALAALCLLRVPGARA. The region spanning 33 to 150 is the FZ domain; that stretch reads AACEPVRIPL…VYDRGVCISP (118 aa). 5 cysteine pairs are disulfide-bonded: C35/C96, C43/C89, C80/C119, C108/C147, and C112/C136. An N-linked (GlcNAc...) asparagine glycan is attached at N49. The NTR domain maps to 178–298; the sequence is CKCKPIRATQ…WDMKLRHLGL (121 aa). Residues 297-325 are disordered; sequence GLSKSDSSNSDSTQSQKSGRNSNPRQARN. The segment covering 299–314 has biased composition (low complexity); the sequence is SKSDSSNSDSTQSQKS. Positions 315–325 are enriched in polar residues; it reads GRNSNPRQARN.

The protein belongs to the secreted frizzled-related protein (sFRP) family. As to quaternary structure, interacts with MYOC. Expressed primarily in the cartilaginous cores of the long bone during embryonic and fetal development and in the appendicular skeleton (6-13 weeks). At 13 weeks of gestation, transcripts were present in early chondroblasts of the tarsal bones of the foot, the carpal bones of the hands and the epiphysis of long bones. Highly expressed in placenta and heart, followed by brain, skeletal muscle, kidney and pancreas. Weakly expressed in lung and liver.

The protein resides in the secreted. In terms of biological role, soluble frizzled-related proteins (sFRPS) function as modulators of Wnt signaling through direct interaction with Wnts. They have a role in regulating cell growth and differentiation in specific cell types. SFRP3/FRZB appears to be involved in limb skeletogenesis. Antagonist of Wnt8 signaling. Regulates chondrocyte maturation and long bone development. The chain is Secreted frizzled-related protein 3 (FRZB) from Homo sapiens (Human).